A 230-amino-acid chain; its full sequence is Cytidylate kinase (230 aa).

Residue 12-20 (GPSGAGKGT) participates in ATP binding.

The protein belongs to the cytidylate kinase family. Type 1 subfamily.

It localises to the cytoplasm. It catalyses the reaction CMP + ATP = CDP + ADP. The catalysed reaction is dCMP + ATP = dCDP + ADP. This is Cytidylate kinase from Shewanella sp. (strain W3-18-1).